A 432-amino-acid polypeptide reads, in one-letter code: Solute carrier family 35 member F5 (432 aa).

An N-terminal signal peptide occupies residues 1–33 (MFLPSTTNHSSAPLQKHLCLFCTFWALLFGSHG). The residue at position 116 (Ser116) is a Phosphoserine. Transmembrane regions (helical) follow at residues 152–172 (ISFFFCFVWFLANLSYQEALS), 177–197 (AIVNILSSTSGLFTLILAAVF), 205–225 (FTLSKLLAVILSIGGVVLVNL), 236–256 (TIGSIWSLAGAMLYAVYIVMI), 270–290 (MFFGFVGLFNLLLLWPGFFLL), 304–324 (VVLMCIIINGLIGTVLSEFLW), 329–349 (FLTSSLIGTLALSLTIPLSII), and 361–381 (WLFFAGAIPVFFSFFIVTLLC). The EamA domain maps to 161-225 (FLANLSYQEA…SIGGVVLVNL (65 aa)).

Belongs to the SLC35F solute transporter family.

It is found in the membrane. Putative solute transporter. The polypeptide is Solute carrier family 35 member F5 (SLC35F5) (Macaca fascicularis (Crab-eating macaque)).